A 178-amino-acid polypeptide reads, in one-letter code: ATP synthase subunit delta (178 aa).

It belongs to the ATPase delta chain family. As to quaternary structure, F-type ATPases have 2 components, F(1) - the catalytic core - and F(0) - the membrane proton channel. F(1) has five subunits: alpha(3), beta(3), gamma(1), delta(1), epsilon(1). F(0) has three main subunits: a(1), b(2) and c(10-14). The alpha and beta chains form an alternating ring which encloses part of the gamma chain. F(1) is attached to F(0) by a central stalk formed by the gamma and epsilon chains, while a peripheral stalk is formed by the delta and b chains.

The protein localises to the cell inner membrane. Functionally, f(1)F(0) ATP synthase produces ATP from ADP in the presence of a proton or sodium gradient. F-type ATPases consist of two structural domains, F(1) containing the extramembraneous catalytic core and F(0) containing the membrane proton channel, linked together by a central stalk and a peripheral stalk. During catalysis, ATP synthesis in the catalytic domain of F(1) is coupled via a rotary mechanism of the central stalk subunits to proton translocation. In terms of biological role, this protein is part of the stalk that links CF(0) to CF(1). It either transmits conformational changes from CF(0) to CF(1) or is implicated in proton conduction. In Pelodictyon phaeoclathratiforme (strain DSM 5477 / BU-1), this protein is ATP synthase subunit delta.